A 627-amino-acid chain; its full sequence is Pescadillo homolog (627 aa).

In terms of domain architecture, BRCT spans 321 to 414 (RLRTLFKGLK…QLLPTNKYFI (94 aa)). Disordered stretches follow at residues 450 to 469 (HVQS…ETVD), 488 to 562 (YKKF…LQAR), and 595 to 627 (TIEA…KLGK). 2 positions are modified to phosphoserine: Ser-453 and Ser-457. Acidic residues-rich tracts occupy residues 454–469 (DDDS…ETVD) and 497–521 (VNED…EELD). Residues 507-538 (DDDNEDDDEEEEELDEKTKRLQEEKQKMSVQS) adopt a coiled-coil conformation. Residues 522 to 533 (EKTKRLQEEKQK) show a composition bias toward basic and acidic residues. A compositionally biased stretch (basic residues) spans 540-549 (KVHKVNKRQV). Composition is skewed to basic and acidic residues over residues 550–559 (HKAEVDEHRL) and 595–615 (TIEA…RKEA). Positions 582–625 (KEKEEWLLRKKRRTIEASEKEARKTAKREARKEAAAAAAKASKL) form a coiled coil. Residues 616 to 627 (AAAAAKASKLGK) are compositionally biased toward low complexity.

This sequence belongs to the pescadillo family.

It is found in the nucleus. Its subcellular location is the nucleolus. It localises to the nucleoplasm. Functionally, required for maturation of ribosomal RNAs and formation of the large ribosomal subunit. The sequence is that of Pescadillo homolog from Drosophila sechellia (Fruit fly).